The chain runs to 306 residues: Tryptophan 2,3-dioxygenase (306 aa).

Residues 1–33 (MQPPGDDAAPRCPFAGAHAPDAPHVPEAAGDDA) are disordered. Substrate-binding positions include 75 to 79 (FIIQH), Tyr-137, and Arg-141. A heme-binding site is contributed by His-264. Residue Thr-278 coordinates substrate.

Belongs to the tryptophan 2,3-dioxygenase family. Homotetramer. The cofactor is heme.

The enzyme catalyses L-tryptophan + O2 = N-formyl-L-kynurenine. It participates in amino-acid degradation; L-tryptophan degradation via kynurenine pathway; L-kynurenine from L-tryptophan: step 1/2. Heme-dependent dioxygenase that catalyzes the oxidative cleavage of the L-tryptophan (L-Trp) pyrrole ring and converts L-tryptophan to N-formyl-L-kynurenine. Catalyzes the oxidative cleavage of the indole moiety. The sequence is that of Tryptophan 2,3-dioxygenase from Burkholderia pseudomallei (strain 1106a).